Consider the following 350-residue polypeptide: MVNVSITTDYSRMLFMRNTKSTLKIAIIGYGSQGRAHALNLRDSGFDIIVGLRPGGATEAKAQADGFTVQSPDQAAKHADLVAVLTPDMVQKKLYEEVLAPNIKQGACLLFAHGLNVHYSLITPRSDLDVVLVAPKGPGALVRREYEIGRGVPCIYAVHQDLSSHAEQLALTYAGGLGGARANIIKTTFKEETETDLFGEQAVLCGGVSSLVQAGFETLVEAGYQPEIAYYEVLHELKLIVDLFYEGGITRMLEFVSETAQYGDYVSGPRVIDRSTKERMKAVLKDIQDGTFTKHWIAEYQAGLPNYKKYKQADLEHPIEKVGKQLRAKMVWLNSEKTNDTTHPMSSKVV.

The region spanning 4-187 (VSITTDYSRM…GGARANIIKT (184 aa)) is the KARI N-terminal Rossmann domain. NADP(+) is bound by residues 30-33 (YGSQ), R53, T58, and 88-91 (DMVQ). The active site involves H113. G139 provides a ligand contact to NADP(+). The 146-residue stretch at 188–333 (TFKEETETDL…KQLRAKMVWL (146 aa)) folds into the KARI C-terminal knotted domain. Mg(2+)-binding residues include D196, E200, E232, and E236. S257 contributes to the substrate binding site.

It belongs to the ketol-acid reductoisomerase family. It depends on Mg(2+) as a cofactor.

It catalyses the reaction (2R)-2,3-dihydroxy-3-methylbutanoate + NADP(+) = (2S)-2-acetolactate + NADPH + H(+). The catalysed reaction is (2R,3R)-2,3-dihydroxy-3-methylpentanoate + NADP(+) = (S)-2-ethyl-2-hydroxy-3-oxobutanoate + NADPH + H(+). It functions in the pathway amino-acid biosynthesis; L-isoleucine biosynthesis; L-isoleucine from 2-oxobutanoate: step 2/4. The protein operates within amino-acid biosynthesis; L-valine biosynthesis; L-valine from pyruvate: step 2/4. Involved in the biosynthesis of branched-chain amino acids (BCAA). Catalyzes an alkyl-migration followed by a ketol-acid reduction of (S)-2-acetolactate (S2AL) to yield (R)-2,3-dihydroxy-isovalerate. In the isomerase reaction, S2AL is rearranged via a Mg-dependent methyl migration to produce 3-hydroxy-3-methyl-2-ketobutyrate (HMKB). In the reductase reaction, this 2-ketoacid undergoes a metal-dependent reduction by NADPH to yield (R)-2,3-dihydroxy-isovalerate. The sequence is that of Ketol-acid reductoisomerase (NADP(+)) from Xylella fastidiosa (strain Temecula1 / ATCC 700964).